The sequence spans 398 residues: Arginine biosynthesis bifunctional protein ArgJ (398 aa).

6 residues coordinate substrate: threonine 148, lysine 174, threonine 185, glutamate 271, asparagine 393, and threonine 398. Threonine 185 serves as the catalytic Nucleophile.

It belongs to the ArgJ family. Heterotetramer of two alpha and two beta chains.

The protein resides in the cytoplasm. It catalyses the reaction N(2)-acetyl-L-ornithine + L-glutamate = N-acetyl-L-glutamate + L-ornithine. It carries out the reaction L-glutamate + acetyl-CoA = N-acetyl-L-glutamate + CoA + H(+). Its pathway is amino-acid biosynthesis; L-arginine biosynthesis; L-ornithine and N-acetyl-L-glutamate from L-glutamate and N(2)-acetyl-L-ornithine (cyclic): step 1/1. It functions in the pathway amino-acid biosynthesis; L-arginine biosynthesis; N(2)-acetyl-L-ornithine from L-glutamate: step 1/4. Functionally, catalyzes two activities which are involved in the cyclic version of arginine biosynthesis: the synthesis of N-acetylglutamate from glutamate and acetyl-CoA as the acetyl donor, and of ornithine by transacetylation between N(2)-acetylornithine and glutamate. This Listeria monocytogenes serovar 1/2a (strain ATCC BAA-679 / EGD-e) protein is Arginine biosynthesis bifunctional protein ArgJ.